Reading from the N-terminus, the 101-residue chain is Small ribosomal subunit protein uS14 (101 aa).

Belongs to the universal ribosomal protein uS14 family. Part of the 30S ribosomal subunit. Contacts proteins S3 and S10.

In terms of biological role, binds 16S rRNA, required for the assembly of 30S particles and may also be responsible for determining the conformation of the 16S rRNA at the A site. In Haemophilus influenzae (strain 86-028NP), this protein is Small ribosomal subunit protein uS14.